Reading from the N-terminus, the 574-residue chain is Arginine--tRNA ligase (574 aa).

The short motif at 126-136 is the 'HIGH' region element; the sequence is PNIAKRMHVGH.

This sequence belongs to the class-I aminoacyl-tRNA synthetase family. In terms of assembly, monomer.

It localises to the cytoplasm. It catalyses the reaction tRNA(Arg) + L-arginine + ATP = L-arginyl-tRNA(Arg) + AMP + diphosphate. This chain is Arginine--tRNA ligase, found in Chloroflexus aggregans (strain MD-66 / DSM 9485).